An 858-amino-acid chain; its full sequence is GDP-fucose protein O-fucosyltransferase 2 (858 aa).

Topologically, residues 1–150 (MHCQLGGQAR…RPPCLLNHRR (150 aa)) are cytoplasmic. The chain crosses the membrane as a helical; Signal-anchor for type II membrane protein span at residues 151 to 171 (LLLGLVSVLTVFLSCLPFTNA). At 172–858 (TVSPAALQDV…WPSLDPSSTL (687 aa)) the chain is on the lumenal side. 237–241 (GEGFH) lines the GDP-beta-L-fucose pocket. E238 acts as the Proton acceptor in catalysis. The tract at residues 448–510 (AALTPQERQR…SRSRKEIQEE (63 aa)) is disordered. Residues 486–510 (DGEREKRKPGRRSDTSRSRKEIQEE) are compositionally biased toward basic and acidic residues. GDP-beta-L-fucose is bound by residues 646-648 (HLR) and 787-788 (RF). The segment at 819–858 (TGGQAQGKCFATKSHDPPEGRSRSELRRKYWPSLDPSSTL) is disordered. The segment covering 831–846 (KSHDPPEGRSRSELRR) has biased composition (basic and acidic residues).

This sequence belongs to the glycosyltransferase 68 family.

It is found in the endoplasmic reticulum membrane. The enzyme catalyses L-seryl-[protein] + GDP-beta-L-fucose = 3-O-(alpha-L-fucosyl)-L-seryl-[protein] + GDP + H(+). It carries out the reaction L-threonyl-[protein] + GDP-beta-L-fucose = 3-O-(alpha-L-fucosyl)-L-threonyl-[protein] + GDP + H(+). It participates in protein modification; protein glycosylation. Catalyzes the reaction that attaches fucose through an O-glycosidic linkage to a conserved serine or threonine residue in the consensus sequence C1-X-X-S/T-C2 of thrombospondin type I repeats (TSRs) where C1 and C2 are the first and second cysteines of the repeat, respectively. O-fucosylates microneme protein MIC2 and may play a role in its stabilization. Probably by regulating protein O-fucosylation, may play a role in tachyzoite adhesion to and/or invasion of host cells; however, POFUT2 involvement in adhesion/invasion is controversial. This chain is GDP-fucose protein O-fucosyltransferase 2, found in Toxoplasma gondii (strain ATCC 50853 / GT1).